We begin with the raw amino-acid sequence, 268 residues long: Tryptophan synthase alpha chain (268 aa).

Residues E49 and D60 each act as proton acceptor in the active site.

The protein belongs to the TrpA family. In terms of assembly, tetramer of two alpha and two beta chains.

The catalysed reaction is (1S,2R)-1-C-(indol-3-yl)glycerol 3-phosphate + L-serine = D-glyceraldehyde 3-phosphate + L-tryptophan + H2O. It functions in the pathway amino-acid biosynthesis; L-tryptophan biosynthesis; L-tryptophan from chorismate: step 5/5. In terms of biological role, the alpha subunit is responsible for the aldol cleavage of indoleglycerol phosphate to indole and glyceraldehyde 3-phosphate. The sequence is that of Tryptophan synthase alpha chain from Escherichia coli (strain SE11).